The sequence spans 226 residues: Cytidylate kinase (226 aa).

Residue 10-18 (GPASSGKST) coordinates ATP.

Belongs to the cytidylate kinase family. Type 1 subfamily.

The protein resides in the cytoplasm. It catalyses the reaction CMP + ATP = CDP + ADP. It carries out the reaction dCMP + ATP = dCDP + ADP. This is Cytidylate kinase from Streptococcus pyogenes serotype M18 (strain MGAS8232).